The chain runs to 223 residues: Proteasome subunit beta type-1 (223 aa).

The protein belongs to the peptidase T1B family. The 26S proteasome consists of a 20S proteasome core and two 19S regulatory subunits. The 20S proteasome core is composed of 28 subunits that are arranged in four stacked rings, resulting in a barrel-shaped structure. The two end rings are each formed by seven alpha subunits, and the two central rings are each formed by seven beta subunits. The catalytic chamber with the active sites is on the inside of the barrel.

Its subcellular location is the cytoplasm. The protein localises to the nucleus. Its function is as follows. Non-catalytic component of the proteasome, a multicatalytic proteinase complex which is characterized by its ability to cleave peptides with Arg, Phe, Tyr, Leu, and Glu adjacent to the leaving group at neutral or slightly basic pH. The proteasome has an ATP-dependent proteolytic activity. This chain is Proteasome subunit beta type-1 (PBF1), found in Petunia hybrida (Petunia).